The following is a 639-amino-acid chain: MSQKVFISEDDEYLFGQGTHYDIYDKLGAHPSEEKGKKGFFFAVWAPNAADVHVVGDFNGWDENAHQMKRSKTGNIWTLFIPGVAIGALYKFLITAQDGRKLYKADPYANYAELRPGNASRTTDLSGFKWSDSKWYESLKGKDMNRQPIAIYECHIGSWMKHPDGTEDGFYTYRQFADRIVEYLKEMKYTHIELIGIAEHPFDGSWGYQVTGYYAPTARYGEPTDFMYLINQLHKHGIGVILDWVPAHFCPDEFGLACFDGTCIYEDPDPRKGEHPDWGTKIFNLAKPEVKNFLIANALYWIRKFHIDGLRVDAVASMLYLDYGKKDGQWVPNKYGDNKNLDAIEFFKHFNSVVRGTYPNILTIAEESTAWPKVTAPPEEDGLGFAFKWNMGWMHDFCEYMKLDPYFRQGAHYMMTFAMSYNDSENYILPLSHDEVVHLKCSMVEKMPGYKVDKYANLRVGYTYMFGHSGKKLLFMGQDFGQEREWSEKRELDWFLLENDLNRGMKDYVGKLLEIYRKYPALYEVDNDWGGFEWINADDKERSTYSFYRRASNGKDNILFVLNMTPMERKGFKVGVPFDGTYTKILDSAKECYGGSGSSVPDKIKAVKGLCDYKDYSIEFDLPPYGAEVFVFQTKKTKN.

The Nucleophile role is filled by Asp-313. Glu-366 acts as the Proton donor in catalysis.

This sequence belongs to the glycosyl hydrolase 13 family. GlgB subfamily. As to quaternary structure, monomer.

It carries out the reaction Transfers a segment of a (1-&gt;4)-alpha-D-glucan chain to a primary hydroxy group in a similar glucan chain.. The protein operates within glycan biosynthesis; glycogen biosynthesis. Functionally, catalyzes the formation of the alpha-1,6-glucosidic linkages in glycogen by scission of a 1,4-alpha-linked oligosaccharide from growing alpha-1,4-glucan chains and the subsequent attachment of the oligosaccharide to the alpha-1,6 position. The protein is 1,4-alpha-glucan branching enzyme GlgB (glgB) of Butyrivibrio fibrisolvens.